The chain runs to 142 residues: Large ribosomal subunit protein uL13 (142 aa).

This sequence belongs to the universal ribosomal protein uL13 family. Part of the 50S ribosomal subunit.

This protein is one of the early assembly proteins of the 50S ribosomal subunit, although it is not seen to bind rRNA by itself. It is important during the early stages of 50S assembly. The sequence is that of Large ribosomal subunit protein uL13 from Yersinia enterocolitica serotype O:8 / biotype 1B (strain NCTC 13174 / 8081).